The primary structure comprises 131 residues: uncharacterized protein (131 aa).

Positions 26-124 constitute an HTH hxlR-type domain; sequence CSVEVAVNEI…WGKMYGSHQE (99 aa).

This is an uncharacterized protein from Methanothermobacter thermautotrophicus (strain ATCC 29096 / DSM 1053 / JCM 10044 / NBRC 100330 / Delta H) (Methanobacterium thermoautotrophicum).